A 380-amino-acid polypeptide reads, in one-letter code: Queuine tRNA-ribosyltransferase (380 aa).

The Proton acceptor role is filled by aspartate 89. Residues 89-93, aspartate 143, glutamine 187, and glycine 214 contribute to the substrate site; that span reads DSGGF. Residues 245–251 form an RNA binding region; the sequence is GVGKPED. Aspartate 264 serves as the catalytic Nucleophile. An RNA binding; important for wobble base 34 recognition region spans residues 269–273; the sequence is TRNAR. The Zn(2+) site is built by cysteine 302, cysteine 304, cysteine 307, and histidine 333.

The protein belongs to the queuine tRNA-ribosyltransferase family. In terms of assembly, homodimer. Within each dimer, one monomer is responsible for RNA recognition and catalysis, while the other monomer binds to the replacement base PreQ1. It depends on Zn(2+) as a cofactor.

It catalyses the reaction 7-aminomethyl-7-carbaguanine + guanosine(34) in tRNA = 7-aminomethyl-7-carbaguanosine(34) in tRNA + guanine. The protein operates within tRNA modification; tRNA-queuosine biosynthesis. Functionally, catalyzes the base-exchange of a guanine (G) residue with the queuine precursor 7-aminomethyl-7-deazaguanine (PreQ1) at position 34 (anticodon wobble position) in tRNAs with GU(N) anticodons (tRNA-Asp, -Asn, -His and -Tyr). Catalysis occurs through a double-displacement mechanism. The nucleophile active site attacks the C1' of nucleotide 34 to detach the guanine base from the RNA, forming a covalent enzyme-RNA intermediate. The proton acceptor active site deprotonates the incoming PreQ1, allowing a nucleophilic attack on the C1' of the ribose to form the product. After dissociation, two additional enzymatic reactions on the tRNA convert PreQ1 to queuine (Q), resulting in the hypermodified nucleoside queuosine (7-(((4,5-cis-dihydroxy-2-cyclopenten-1-yl)amino)methyl)-7-deazaguanosine). The sequence is that of Queuine tRNA-ribosyltransferase from Proteus mirabilis (strain HI4320).